The following is a 357-amino-acid chain: Heat-inducible transcription repressor HrcA (357 aa).

It belongs to the HrcA family.

Negative regulator of class I heat shock genes (grpE-dnaK-dnaJ and groELS operons). Prevents heat-shock induction of these operons. This is Heat-inducible transcription repressor HrcA from Chlorobium phaeobacteroides (strain DSM 266 / SMG 266 / 2430).